A 264-amino-acid chain; its full sequence is Acyl-[acyl-carrier-protein]--UDP-N-acetylglucosamine O-acyltransferase (264 aa).

Belongs to the transferase hexapeptide repeat family. LpxA subfamily. Homotrimer.

Its subcellular location is the cytoplasm. It carries out the reaction a (3R)-hydroxyacyl-[ACP] + UDP-N-acetyl-alpha-D-glucosamine = a UDP-3-O-[(3R)-3-hydroxyacyl]-N-acetyl-alpha-D-glucosamine + holo-[ACP]. Its pathway is glycolipid biosynthesis; lipid IV(A) biosynthesis; lipid IV(A) from (3R)-3-hydroxytetradecanoyl-[acyl-carrier-protein] and UDP-N-acetyl-alpha-D-glucosamine: step 1/6. Functionally, involved in the biosynthesis of lipid A, a phosphorylated glycolipid that anchors the lipopolysaccharide to the outer membrane of the cell. The sequence is that of Acyl-[acyl-carrier-protein]--UDP-N-acetylglucosamine O-acyltransferase from Albidiferax ferrireducens (strain ATCC BAA-621 / DSM 15236 / T118) (Rhodoferax ferrireducens).